The sequence spans 90 residues: Guanine nucleotide-binding protein subunit gamma (90 aa).

Cysteine 86 carries the S-palmitoyl cysteine lipid modification. The residue at position 87 (cysteine 87) is a Cysteine methyl ester. Cysteine 87 carries the S-farnesyl cysteine lipid modification. A propeptide spans 88 to 90 (removed in mature form); the sequence is CIM.

Belongs to the G protein gamma family. As to quaternary structure, g proteins are composed of 3 units, alpha, beta and gamma.

It localises to the membrane. The protein is Guanine nucleotide-binding protein subunit gamma of Eremothecium gossypii (strain ATCC 10895 / CBS 109.51 / FGSC 9923 / NRRL Y-1056) (Yeast).